Reading from the N-terminus, the 75-residue chain is Alpha-elapitoxin-Bc2c (75 aa).

The first 2 residues, 1 to 2, serve as a signal peptide directing secretion; it reads YT. 5 disulfides stabilise this stretch: Cys-5/Cys-24, Cys-17/Cys-45, Cys-30/Cys-34, Cys-49/Cys-60, and Cys-61/Cys-66.

It belongs to the three-finger toxin family. Long-chain subfamily. Type II alpha-neurotoxin sub-subfamily. As to quaternary structure, monomer in solution, homodimer in crystal state. As to expression, expressed by the venom gland.

The protein localises to the secreted. Its function is as follows. Binds to muscular and neuronal nicotinic acetylcholine receptor (nAChR) and inhibits acetylcholine from binding to the receptor, thereby impairing neuromuscular and neuronal transmission. Blocks muscle type nAChR. Also binds with high affinity to alpha-7/CHRNA7 nAChRs. In addition, shows a weak inhibition of neuronal alpha-3-beta-2/CHRNA3-CHRNB2 nAChR. Selectively binds to alpha-1-delta subunit interface of the mouse muscle nicotinic acetylcholine receptor, with a 10-fold higher affinity for the adult than for the fetal receptors. In vivo, when intraperitoneally injected into mice, causes flaccid paralysis and respiratory distress, followed by death within 2-4 hours. This is Alpha-elapitoxin-Bc2c from Bungarus candidus (Malayan krait).